The primary structure comprises 763 residues: Exo-1,4-beta-xylosidase bxlB (763 aa).

Residues 1–23 (MAVFKSWNLALLSSLFIPALCQS) form the signal peptide. Asn63 carries N-linked (GlcNAc...) asparagine glycosylation. Residue Asp288 is part of the active site. N-linked (GlcNAc...) asparagine glycans are attached at residues Asn340, Asn408, Asn419, Asn458, Asn621, and Asn760.

The protein belongs to the glycosyl hydrolase 3 family.

It is found in the secreted. It carries out the reaction Hydrolysis of (1-&gt;4)-beta-D-xylans, to remove successive D-xylose residues from the non-reducing termini.. It functions in the pathway glycan degradation; xylan degradation. Xylan 1,4-beta-xylosidase involved in the hydrolysis of xylan, a major structural heterogeneous polysaccharide found in plant biomass representing the second most abundant polysaccharide in the biosphere, after cellulose. Active against rye arabinoxylan and xylohexaose, but not paranitrophenyl-beta-xyloside. In Emericella nidulans (strain FGSC A4 / ATCC 38163 / CBS 112.46 / NRRL 194 / M139) (Aspergillus nidulans), this protein is Exo-1,4-beta-xylosidase bxlB (bxlB).